The sequence spans 347 residues: GMP reductase (347 aa).

108–131 (ADFQKTKDIMALTDDLIFICIDIA) is an NADP(+) binding site. K(+)-binding residues include glycine 181 and glycine 183. The active-site Thioimidate intermediate is the cysteine 186. An NADP(+)-binding site is contributed by 216–239 (IIGDGGCSCAGDVSKAFGGGADFV).

It belongs to the IMPDH/GMPR family. GuaC type 1 subfamily. As to quaternary structure, homotetramer.

It catalyses the reaction IMP + NH4(+) + NADP(+) = GMP + NADPH + 2 H(+). In terms of biological role, catalyzes the irreversible NADPH-dependent deamination of GMP to IMP. It functions in the conversion of nucleobase, nucleoside and nucleotide derivatives of G to A nucleotides, and in maintaining the intracellular balance of A and G nucleotides. The protein is GMP reductase of Aliivibrio fischeri (strain ATCC 700601 / ES114) (Vibrio fischeri).